Consider the following 242-residue polypeptide: ATP synthase subunit a (242 aa).

6 helical membrane-spanning segments follow: residues 29 to 49, 83 to 103, 114 to 134, 140 to 160, 181 to 201, and 206 to 226; these read SAVAMIFVSIAASLLLIIAFV, VFFPLILTLFLFISLGNIIGM, IIVTFSLAMIVFTTTLVYGIY, FFSLFLPKNIPLWLAPIMVII, VAGHILLKIIAWSIVSLTWFF, and IALVIVLIGFELFISILQAYI.

The protein belongs to the ATPase A chain family. As to quaternary structure, F-type ATPases have 2 components, CF(1) - the catalytic core - and CF(0) - the membrane proton channel. CF(1) has five subunits: alpha(3), beta(3), gamma(1), delta(1), epsilon(1). CF(0) has three main subunits: a(1), b(2) and c(9-12). The alpha and beta chains form an alternating ring which encloses part of the gamma chain. CF(1) is attached to CF(0) by a central stalk formed by the gamma and epsilon chains, while a peripheral stalk is formed by the delta and b chains.

It localises to the cell inner membrane. In terms of biological role, key component of the proton channel; it plays a direct role in the translocation of protons across the membrane. In Orientia tsutsugamushi (strain Boryong) (Rickettsia tsutsugamushi), this protein is ATP synthase subunit a.